The sequence spans 290 residues: Phosphate import ATP-binding protein PstB (290 aa).

One can recognise an ABC transporter domain in the interval 43 to 285; that stretch reads MSVRNLNVYY…PEHELTEAYI (243 aa). Position 75-82 (75-82) interacts with ATP; sequence GPSGCGKS.

Belongs to the ABC transporter superfamily. Phosphate importer (TC 3.A.1.7) family. The complex is composed of two ATP-binding proteins (PstB), two transmembrane proteins (PstC and PstA) and a solute-binding protein (PstS).

The protein resides in the cell inner membrane. It carries out the reaction phosphate(out) + ATP + H2O = ADP + 2 phosphate(in) + H(+). Part of the ABC transporter complex PstSACB involved in phosphate import. Responsible for energy coupling to the transport system. This is Phosphate import ATP-binding protein PstB from Pseudoalteromonas atlantica (strain T6c / ATCC BAA-1087).